The primary structure comprises 432 residues: FLYWCH-type zinc finger-containing protein peb-1 (432 aa).

Residues 1 to 33 form a disordered region; sequence MLGLEKPLSSDISSSSTDTSAISPISVSSMPLS. Low complexity predominate over residues 9–26; sequence SSDISSSSTDTSAISPIS. The segment at residues 30-188 is a DNA-binding region (required for DNA-binding); that stretch reads MPLSPDKEKK…RNKEGKPRKP (159 aa). The FLYWCH-type zinc-finger motif lies at 53–120; it reads IVTSFKGYQK…NACTKNTHNH (68 aa). The tract at residues 174–195 is disordered; the sequence is SLVSARNKEGKPRKPKSKTSTN.

The protein localises to the nucleus. In terms of biological role, putative transcription factor. Binds to specific sequence motif 5'-[TC][AGT]TGCC[GA][AT]-3' in regulatory elements of target genes such as myosin myo-2. May modulate gene expression, perhaps acting in opposition to transcription factor pha-4. Involved in morphogenesis, perhaps especially in formation of the pharynx. Plays roles in molting, feeding and morphology. The protein is FLYWCH-type zinc finger-containing protein peb-1 of Caenorhabditis briggsae.